The following is a 90-amino-acid chain: Putative regulatory protein cce_4590 (90 aa).

This sequence belongs to the RemA family.

This chain is Putative regulatory protein cce_4590, found in Crocosphaera subtropica (strain ATCC 51142 / BH68) (Cyanothece sp. (strain ATCC 51142)).